Consider the following 139-residue polypeptide: Putative pre-16S rRNA nuclease (139 aa).

The protein belongs to the YqgF nuclease family.

The protein resides in the cytoplasm. Functionally, could be a nuclease involved in processing of the 5'-end of pre-16S rRNA. This chain is Putative pre-16S rRNA nuclease, found in Streptococcus pneumoniae (strain JJA).